Here is a 65-residue protein sequence, read N- to C-terminus: Large ribosomal subunit protein bL35 (65 aa).

The protein belongs to the bacterial ribosomal protein bL35 family.

In Paraburkholderia phytofirmans (strain DSM 17436 / LMG 22146 / PsJN) (Burkholderia phytofirmans), this protein is Large ribosomal subunit protein bL35.